The following is a 357-amino-acid chain: Isopentenyl-diphosphate delta-isomerase (357 aa).

12-13 lines the substrate pocket; the sequence is RK. FMN is bound by residues S70, 71 to 73, S101, and N130; that span reads SMT. 101–103 contributes to the substrate binding site; sequence SMR. Q165 serves as a coordination point for substrate. E166 is a binding site for Mg(2+). Residues K197, 289–291, and 310–311 each bind FMN; these read GIR and AQ.

Belongs to the IPP isomerase type 2 family. Homooctamer. Dimer of tetramers. The cofactor is FMN. NADPH is required as a cofactor. Mg(2+) serves as cofactor.

It localises to the cytoplasm. It catalyses the reaction isopentenyl diphosphate = dimethylallyl diphosphate. Involved in the biosynthesis of isoprenoids. Catalyzes the 1,3-allylic rearrangement of the homoallylic substrate isopentenyl (IPP) to its allylic isomer, dimethylallyl diphosphate (DMAPP). The protein is Isopentenyl-diphosphate delta-isomerase of Chlorobaculum parvum (strain DSM 263 / NCIMB 8327) (Chlorobium vibrioforme subsp. thiosulfatophilum).